The sequence spans 206 residues: 21.9 kDa heat shock protein (206 aa).

The N-terminal stretch at 1 to 29 (MAAVAEREVLGMVAAVAAMVVMMAPPAAA) is a signal peptide. A sHSP domain is found at 65 to 187 (EPAAVALARC…GREPRVVAID (123 aa)). Positions 94–96 (RGD) match the Cell attachment site motif.

Belongs to the small heat shock protein (HSP20) family. As to quaternary structure, may form oligomeric structures.

It is found in the endoplasmic reticulum. The protein is 21.9 kDa heat shock protein (HSP21.9) of Oryza sativa subsp. japonica (Rice).